The primary structure comprises 539 residues: Ell-associated factor Eaf (539 aa).

The segment at 119–539 is disordered; that stretch reads TRSEMTHHKP…SSNSSDDDDD (421 aa). Residues 132-146 show a composition bias toward polar residues; that stretch reads PATNINHNNIPMSTN. Positions 151-163 are enriched in pro residues; the sequence is GPGPGPGSGPSPP. Residues 174-195 show a composition bias toward polar residues; the sequence is KLENSTMRISSKTKVSTGSRRN. A Phosphoserine modification is found at S205. The span at 220–238 shows a compositional bias: polar residues; the sequence is RSPQSAPAWNANNAQQTLP. 3 stretches are compositionally biased toward low complexity: residues 267–278, 309–337, and 345–375; these read SGSSTGSSTGQP, MHQNHQQHPSPPMHQQQQQQQQQQHYGRG, and NNYAQQQQPQQHHQQQEQQRPSSSSTYSHHS. Positions 420–435 are enriched in acidic residues; sequence DSSDSDSGSESDDSTD. Low complexity-rich tracts occupy residues 461–493 and 520–533; these read HQQLQQQPPQQQQQQQQQQQYNHHMQQQHQPQQ and NDLLQNDLQLSSNS.

This sequence belongs to the EAF family.

Its subcellular location is the nucleus. Promotes transcriptional elongation by Su(Tpl)/ELL. Essential for development. The sequence is that of Ell-associated factor Eaf from Drosophila willistoni (Fruit fly).